A 583-amino-acid polypeptide reads, in one-letter code: Phosphoglucomutase, cytoplasmic 1 (583 aa).

Alpha-D-glucose 1,6-bisphosphate is bound by residues Arg-25 and Ser-124. The Phosphoserine intermediate role is filled by Ser-124. Mg(2+) contacts are provided by Ser-124, Asp-300, Asp-302, and Asp-304. Ser-124 bears the Phosphoserine mark. Residues Asp-304, Arg-305, Thr-368, Glu-387, Ser-389, and Lys-400 each contribute to the alpha-D-glucose 1,6-bisphosphate site.

This sequence belongs to the phosphohexose mutase family. In terms of assembly, monomer. It depends on Mg(2+) as a cofactor. Post-translationally, autophosphorylated. Mostly expressed in roots and coleoptiles, and, to a lower extent, in leaves, pollen and developing seeds.

The protein localises to the cytoplasm. It carries out the reaction alpha-D-glucose 1-phosphate = alpha-D-glucose 6-phosphate. The enzyme catalyses O-phospho-L-seryl-[protein] + alpha-D-glucose 1-phosphate = alpha-D-glucose 1,6-bisphosphate + L-seryl-[protein]. The catalysed reaction is alpha-D-glucose 1,6-bisphosphate + L-seryl-[protein] = O-phospho-L-seryl-[protein] + alpha-D-glucose 6-phosphate. Functionally, catalyzes the reversible isomerization of alpha-D-glucose 1-phosphate to alpha-D-glucose 6-phosphate. The mechanism proceeds via the intermediate compound alpha-D-glucose 1,6-bisphosphate. This enzyme participates in both the breakdown and synthesis of glucose. The protein is Phosphoglucomutase, cytoplasmic 1 of Zea mays (Maize).